The sequence spans 320 residues: Pyrroline-5-carboxylate reductase (320 aa).

It belongs to the pyrroline-5-carboxylate reductase family.

It carries out the reaction L-proline + NADP(+) = (S)-1-pyrroline-5-carboxylate + NADPH + 2 H(+). The catalysed reaction is L-proline + NAD(+) = (S)-1-pyrroline-5-carboxylate + NADH + 2 H(+). Its pathway is amino-acid biosynthesis; L-proline biosynthesis; L-proline from L-glutamate 5-semialdehyde: step 1/1. This chain is Pyrroline-5-carboxylate reductase (P5CR), found in Lophium arboricola (Zalerion arboricola).